The sequence spans 120 residues: UPF0231 protein Ent638_0667 (120 aa).

The protein belongs to the UPF0231 family.

The sequence is that of UPF0231 protein Ent638_0667 from Enterobacter sp. (strain 638).